The chain runs to 772 residues: Serine/threonine-protein kinase tousled-like 2 (772 aa).

Residues 24–126 form a disordered region; it reads GVSKGPLNSE…SNPLPRRVEQ (103 aa). Over residues 29 to 44 the composition is skewed to polar residues; sequence PLNSESSNQSLCSVGS. The span at 46-61 shows a compositional bias: basic and acidic residues; the sequence is SDKEVETPEKKQNDQR. Phosphoserine is present on residues Ser73, Ser94, Ser99, Ser115, Ser117, and Ser134. The tract at residues 180 to 208 is disordered; it reads QNSPSSTGSGNTEHSCSSQKQISIQHRQT. Positions 225 to 276 are required for interaction with TLK1 and DYNLL1/LC8; the sequence is NSDLEKKEGRIDDLLRANCDLRRQIDEQQKMLEKYKERLNRCVTMSKKLLIE. Coiled-coil stretches lie at residues 225–276 and 317–347; these read NSDL…LLIE and AFQNLIKQQERINSQREEIERQRKMLAKRKP. The segment at 342 to 385 is disordered; the sequence is LAKRKPPAMGQAPPATNEQKQRKSKTNGAENETPSSGNTELKDT. Over residues 367 to 380 the composition is skewed to polar residues; sequence TNGAENETPSSGNT. A coiled-coil region spans residues 403-451; the sequence is HEQEEIFKLRLGHLKKEEAEIQAELERLERVRNLHIRELKRIHNEDNSQ. One can recognise a Protein kinase domain in the interval 462–741; that stretch reads YLLLHLLGRG…VQQLACDPYL (280 aa). ATP is bound by residues 468-476 and Lys491; that span reads LGRGGFSEV. The active-site Proton acceptor is the Asp592. Position 750 is a phosphoserine; by CHEK1 (Ser750).

Belongs to the protein kinase superfamily. Ser/Thr protein kinase family. Monomer. May form homodimers; homodimerization may enhance autophosphoylation and enzymatic activity. Heterodimer with TLK1. Interacts with YWHAZ; association with 14-3-3 proteins such as YWHAZ regulates subcellular location. May also interact with FEZ1/LZTS1 and FEZ2. Interacts with CHD7 and CHD8. Interacts with DYNLL1/LC8. The cofactor is Mg(2+). Phosphorylated at Ser-750, probably by CHEK1. In terms of processing, autophosphorylated; phosphorylation promotes the assembly of higher order oligomers and enzymatic activity. In terms of tissue distribution, detected in placenta, fetal liver, kidney, pancreas, heart and skeletal muscle. Highly expressed in testis. Detected in spleen, thymus, colon, ovary, small intestine, prostate and peripheral blood leukocytes. Almost undetectable in liver and lung.

The protein resides in the nucleus. It is found in the nucleoplasm. The protein localises to the cytoplasm. It localises to the perinuclear region. Its subcellular location is the cytoskeleton. The enzyme catalyses L-seryl-[protein] + ATP = O-phospho-L-seryl-[protein] + ADP + H(+). It carries out the reaction L-threonyl-[protein] + ATP = O-phospho-L-threonyl-[protein] + ADP + H(+). With respect to regulation, cell cycle-regulated, with maximal activity in the S-phase. Rapidly and transiently inhibited by phosphorylation following the generation of DNA double-stranded breaks during S-phase, probably by CHEK1, possibly at Ser-750. This inhibition is cell cycle checkpoint- and ATM-dependent. Functionally, serine/threonine-protein kinase involved in the process of chromatin assembly and probably also DNA replication, transcription, repair, and chromosome segregation. Phosphorylates the chromatin assembly factors ASF1A and ASF1B. Phosphorylation of ASF1A prevents its proteasome-mediated degradation, thereby enhancing chromatin assembly. Negative regulator of amino acid starvation-induced autophagy. This chain is Serine/threonine-protein kinase tousled-like 2, found in Homo sapiens (Human).